Reading from the N-terminus, the 195-residue chain is HTH-type transcriptional regulator BetI (195 aa).

Residues 8–68 enclose the HTH tetR-type domain; sequence PIRRQQLIEA…ATMRYLISHL (61 aa). A DNA-binding region (H-T-H motif) is located at residues 31 to 50; that stretch reads SIVQIARRAGVSNGIISHYF.

It functions in the pathway amine and polyamine biosynthesis; betaine biosynthesis via choline pathway [regulation]. Its function is as follows. Repressor involved in the biosynthesis of the osmoprotectant glycine betaine. It represses transcription of the choline transporter BetT and the genes of BetAB involved in the synthesis of glycine betaine. The chain is HTH-type transcriptional regulator BetI from Pectobacterium atrosepticum (strain SCRI 1043 / ATCC BAA-672) (Erwinia carotovora subsp. atroseptica).